Here is a 950-residue protein sequence, read N- to C-terminus: Bifunctional glutamine synthetase adenylyltransferase/adenylyl-removing enzyme (950 aa).

Residues 1 to 440 (MLPLPSELQI…VFDHLIGDDA (440 aa)) are adenylyl removase. Residues 449–950 (HGLYKSLWQD…KWLVAAPSDV (502 aa)) are adenylyl transferase.

It belongs to the GlnE family. Requires Mg(2+) as cofactor.

The catalysed reaction is [glutamine synthetase]-O(4)-(5'-adenylyl)-L-tyrosine + phosphate = [glutamine synthetase]-L-tyrosine + ADP. It catalyses the reaction [glutamine synthetase]-L-tyrosine + ATP = [glutamine synthetase]-O(4)-(5'-adenylyl)-L-tyrosine + diphosphate. Its function is as follows. Involved in the regulation of glutamine synthetase GlnA, a key enzyme in the process to assimilate ammonia. When cellular nitrogen levels are high, the C-terminal adenylyl transferase (AT) inactivates GlnA by covalent transfer of an adenylyl group from ATP to specific tyrosine residue of GlnA, thus reducing its activity. Conversely, when nitrogen levels are low, the N-terminal adenylyl removase (AR) activates GlnA by removing the adenylyl group by phosphorolysis, increasing its activity. The regulatory region of GlnE binds the signal transduction protein PII (GlnB) which indicates the nitrogen status of the cell. The polypeptide is Bifunctional glutamine synthetase adenylyltransferase/adenylyl-removing enzyme (Yersinia enterocolitica serotype O:8 / biotype 1B (strain NCTC 13174 / 8081)).